Reading from the N-terminus, the 1170-residue chain is Error-prone DNA polymerase (1170 aa).

Disordered regions lie at residues 867 to 899 (RGARSANPESRDSGFALRAPRNDNDRQIPLHND) and 1129 to 1170 (IPHG…RDFH). Positions 886-899 (PRNDNDRQIPLHND) are enriched in basic and acidic residues.

It belongs to the DNA polymerase type-C family. DnaE2 subfamily.

The protein localises to the cytoplasm. The catalysed reaction is DNA(n) + a 2'-deoxyribonucleoside 5'-triphosphate = DNA(n+1) + diphosphate. In terms of biological role, DNA polymerase involved in damage-induced mutagenesis and translesion synthesis (TLS). It is not the major replicative DNA polymerase. The protein is Error-prone DNA polymerase of Bradyrhizobium sp. (strain ORS 278).